The sequence spans 256 residues: Protein CUSTOS (256 aa).

Over residues 1-19 (MVAPSGAMSDSENSSSSSS) the composition is skewed to low complexity. 3 disordered regions span residues 1–83 (MVAP…TPEF), 127–163 (FTSIPGGHKKEASPRPCRKRQPPSSSEDSDEELQRCR), and 227–256 (IQKKRKKKAKKSREAPLCPPAECAAAKPEN). Ser62 carries the phosphoserine modification. A compositionally biased stretch (basic and acidic residues) spans 63–83 (RRHEVNQHEEDGNDLRTTPEF). The residue at position 80 (Thr80) is a Phosphothreonine. Ser139 carries the phosphoserine modification. The short motif at 228–235 (QKKRKKKA) is the Nucleolar localization signal (NLS) element. Residues 228 to 237 (QKKRKKKAKK) are compositionally biased toward basic residues. Residues 246–256 (PAECAAAKPEN) are compositionally biased toward low complexity.

It belongs to the CUSTOS family.

It localises to the nucleus envelope. Its function is as follows. Plays a role in the regulation of Wnt signaling pathway during early development. This chain is Protein CUSTOS, found in Mus musculus (Mouse).